Here is a 462-residue protein sequence, read N- to C-terminus: Chromosomal replication initiator protein DnaA (462 aa).

Positions 1 to 84 are domain I, interacts with DnaA modulators; the sequence is MAVSLWQQCI…RFDIGSRPSA (84 aa). The tract at residues 84–125 is domain II; the sequence is AKKPSVPAPIAPTRVANTQTKATVGTTFNVQAEPMANANHRS. Positions 126 to 342 are domain III, AAA+ region; it reads NINPSYQFDN…GALNRVIANA (217 aa). The ATP site is built by Gly170, Gly172, Lys173, and Thr174. The segment at 343–462 is domain IV, binds dsDNA; the sequence is NFTGRPITID…YANLIRTLSS (120 aa).

The protein belongs to the DnaA family. In terms of assembly, oligomerizes as a right-handed, spiral filament on DNA at oriC.

It is found in the cytoplasm. In terms of biological role, plays an essential role in the initiation and regulation of chromosomal replication. ATP-DnaA binds to the origin of replication (oriC) to initiate formation of the DNA replication initiation complex once per cell cycle. Binds the DnaA box (a 9 base pair repeat at the origin) and separates the double-stranded (ds)DNA. Forms a right-handed helical filament on oriC DNA; dsDNA binds to the exterior of the filament while single-stranded (ss)DNA is stabiized in the filament's interior. The ATP-DnaA-oriC complex binds and stabilizes one strand of the AT-rich DNA unwinding element (DUE), permitting loading of DNA polymerase. After initiation quickly degrades to an ADP-DnaA complex that is not apt for DNA replication. Binds acidic phospholipids. This is Chromosomal replication initiator protein DnaA from Shewanella baltica (strain OS195).